Reading from the N-terminus, the 119-residue chain is uncharacterized protein (119 aa).

2 helical membrane passes run 19–39 and 68–88; these read FYPSFPFYLSFPFCPSFPSFL and FPWFLPLLQLVYLCYKVPWLL.

It localises to the membrane. This is an uncharacterized protein from Saccharomyces cerevisiae (strain ATCC 204508 / S288c) (Baker's yeast).